The primary structure comprises 694 residues: Elongation factor G (694 aa).

Residues E10–L285 form the tr-type G domain. Residues A19–T26, D83–H87, and N137–D140 contribute to the GTP site.

It belongs to the TRAFAC class translation factor GTPase superfamily. Classic translation factor GTPase family. EF-G/EF-2 subfamily.

Its subcellular location is the cytoplasm. Functionally, catalyzes the GTP-dependent ribosomal translocation step during translation elongation. During this step, the ribosome changes from the pre-translocational (PRE) to the post-translocational (POST) state as the newly formed A-site-bound peptidyl-tRNA and P-site-bound deacylated tRNA move to the P and E sites, respectively. Catalyzes the coordinated movement of the two tRNA molecules, the mRNA and conformational changes in the ribosome. This chain is Elongation factor G, found in Lactobacillus delbrueckii subsp. bulgaricus (strain ATCC BAA-365 / Lb-18).